Reading from the N-terminus, the 164-residue chain is MLGASVTVPSACSVLSLDVGRKRIGLAGCDPLGITVSPLPALHRGRFDNDLLVLRHHCQTRSVQGLVVGLPLDAAGQPTAQAEHCRRYGVRLAQSLGLPLAWVNEHSSTWAAGERHGLQGDRTGRLDSAAAALLLEQWLQDGPALKPAQSMAAGTGAEPIDGGS.

It belongs to the YqgF nuclease family.

It localises to the cytoplasm. Could be a nuclease involved in processing of the 5'-end of pre-16S rRNA. This is Putative pre-16S rRNA nuclease from Synechococcus sp. (strain CC9902).